The sequence spans 170 residues: Helix-loop-helix protein 3 (170 aa).

A compositionally biased stretch (low complexity) spans 1–26 (MTASTSSTPSTSTKIPSSSKSSVTKQ). Disordered stretches follow at residues 1 to 42 (MTAS…VDQV) and 118 to 170 (TPSP…TETY). A basic motif; degenerate region spans residues 26–39 (QTKQKRNERERKRV). In terms of domain architecture, bHLH spans 26–79 (QTKQKRNERERKRVDQVNQGFVLLQERVPKAAGNKAKLSKVETLREAARYIQEL). Basic and acidic residues predominate over residues 30-40 (KRNERERKRVD). The tract at residues 40–79 (DQVNQGFVLLQERVPKAAGNKAKLSKVETLREAARYIQEL) is helix-loop-helix motif. Residues 143 to 157 (SHYYQESSSSSASTS) are compositionally biased toward low complexity.

Efficient DNA binding requires dimerization with another bHLH protein. Forms a heterodimer with hlh-2. As to expression, expressed in the ADL sensory neurons.

The protein localises to the nucleus. Functionally, probable transcriptional regulator. May mediate transcriptional activation by binding to the E-box motif 5'-CANNTG-3'. Plays a role in the differentiation of the hermaphrodite-specific motor neurons (HSN) that are required for normal egg laying. Might play a role in serotonin production by regulating expression of the tryptophan hydrolase tph-1 which catalyzes serotonin synthesis, in the HSN neurons. Also plays a role in HSN axon guidance towards the vulva and the ventral nerve cord, possibly by promoting the expression of the netrin receptor unc-40. Under feeding conditions, involved in the regulation of the srh-234 chemoreceptor encoding gene expression in the ADL sensory neurons. Together with hlh-2, involved in the induction of programmed cell death in the sister cells of the serotonergic neurosecretory motor (NSM) neurons, probably through the activation of egl-1 transcription. The sequence is that of Helix-loop-helix protein 3 from Caenorhabditis elegans.